A 1040-amino-acid chain; its full sequence is Multidrug resistance protein MdtB (1040 aa).

A run of 12 helical transmembrane segments spans residues 16 to 36 (FIMRPVATTLLMVAILLAGII), 347 to 367 (LMMAIALVVMIIYLFLRNIPA), 369 to 389 (IIPGVAVPLSLIGTFAVMVFL), 396 to 416 (LTLMALTIATGFVVDDAIVVI), 440 to 460 (IGFTIISLTFSLIAVLIPLLF), 472 to 492 (FAITLAVAILISAVVSLTLTP), 537 to 557 (WLTLSVALSTLLLSVLLWVFI), 863 to 883 (LGSTVWLIVAAVVAMYIVLGI), 888 to 908 (FIHPITILSTLPTAGVGALLA), 911 to 931 (IAGSELDVIAIIGIILLIGIV), 968 to 988 (ILMTTLAALLGALPLMLSTGV), and 998 to 1018 (IGMVGGLIVSQVLTLFTTPVI).

Belongs to the resistance-nodulation-cell division (RND) (TC 2.A.6) family. MdtB subfamily. In terms of assembly, part of a tripartite efflux system composed of MdtA, MdtB and MdtC. MdtB forms a heteromultimer with MdtC.

The protein localises to the cell inner membrane. The MdtABC tripartite complex confers resistance against novobiocin and deoxycholate. This Escherichia coli O7:K1 (strain IAI39 / ExPEC) protein is Multidrug resistance protein MdtB.